The sequence spans 599 residues: Proline dehydrogenase 1, mitochondrial (599 aa).

Disordered stretches follow at residues 20–39 and 152–180; these read STKPQAQEQPPASPEALRGC and EEAERKEMESCTSEAERDGSGANKREKQY. The segment covering 23 to 39 has biased composition (low complexity); it reads PQAQEQPPASPEALRGC. Basic and acidic residues predominate over residues 153 to 180; sequence EAERKEMESCTSEAERDGSGANKREKQY. 3 positions are modified to N6-acetyllysine: lysine 356, lysine 367, and lysine 485.

It belongs to the proline oxidase family. FAD serves as cofactor. In terms of tissue distribution, expressed in liver, kidney, heart and to a lesser extent in brain, lung and muscle.

Its subcellular location is the mitochondrion matrix. It catalyses the reaction L-proline + a quinone = (S)-1-pyrroline-5-carboxylate + a quinol + H(+). The protein operates within amino-acid degradation; L-proline degradation into L-glutamate; L-glutamate from L-proline: step 1/2. In terms of biological role, converts proline to delta-1-pyrroline-5-carboxylate. The polypeptide is Proline dehydrogenase 1, mitochondrial (Prodh) (Mus musculus (Mouse)).